Here is a 216-residue protein sequence, read N- to C-terminus: Holliday junction branch migration complex subunit RuvA (216 aa).

Positions 1–64 are domain I; that stretch reads MISFIKGVLI…EDAQQLYGFK (64 aa). The interval 65-143 is domain II; it reads SKVDKKVFQE…KMANEIYAQT (79 aa). The interval 144-163 is flexible linker; sequence SGTTTTSQDSQAQQAPTSVV. A domain III region spans residues 164–216; that stretch reads LANSIFNESVDALLALGYKQKDAEKMARSAMGDATTAAEVIRKALQGSIKSKR.

It belongs to the RuvA family. Homotetramer. Forms an RuvA(8)-RuvB(12)-Holliday junction (HJ) complex. HJ DNA is sandwiched between 2 RuvA tetramers; dsDNA enters through RuvA and exits via RuvB. An RuvB hexamer assembles on each DNA strand where it exits the tetramer. Each RuvB hexamer is contacted by two RuvA subunits (via domain III) on 2 adjacent RuvB subunits; this complex drives branch migration. In the full resolvosome a probable DNA-RuvA(4)-RuvB(12)-RuvC(2) complex forms which resolves the HJ.

The protein resides in the cytoplasm. In terms of biological role, the RuvA-RuvB-RuvC complex processes Holliday junction (HJ) DNA during genetic recombination and DNA repair, while the RuvA-RuvB complex plays an important role in the rescue of blocked DNA replication forks via replication fork reversal (RFR). RuvA specifically binds to HJ cruciform DNA, conferring on it an open structure. The RuvB hexamer acts as an ATP-dependent pump, pulling dsDNA into and through the RuvAB complex. HJ branch migration allows RuvC to scan DNA until it finds its consensus sequence, where it cleaves and resolves the cruciform DNA. The sequence is that of Holliday junction branch migration complex subunit RuvA from Francisella tularensis subsp. tularensis (strain WY96-3418).